The chain runs to 92 residues: Mitochondrial import inner membrane translocase subunit tim8 (92 aa).

A Twin CX3C motif motif is present at residues 43 to 68; sequence CWKKCVTSPIKTNQLDKTEAVCMADC. Cystine bridges form between Cys-43–Cys-68 and Cys-47–Cys-64.

It belongs to the small Tim family. In terms of assembly, heterohexamer; composed of 3 copies of tim8 and 3 copies of tim13, named soluble 70 kDa complex. Associates with the TIM22 complex, whose core is composed of tim22 and tim54. Interacts with the transmembrane regions of multi-pass transmembrane proteins in transit.

Its subcellular location is the mitochondrion inner membrane. Its function is as follows. Mitochondrial intermembrane chaperone that participates in the import and insertion of some multi-pass transmembrane proteins into the mitochondrial inner membrane. Also required for the transfer of beta-barrel precursors from the TOM complex to the sorting and assembly machinery (SAM complex) of the outer membrane. Acts as a chaperone-like protein that protects the hydrophobic precursors from aggregation and guide them through the mitochondrial intermembrane space. The tim8-tim13 complex is non essential and only mediates the import of few proteins, while the predominant tim9-tim10 70 kDa complex is crucial and mediates the import of much more proteins. This is Mitochondrial import inner membrane translocase subunit tim8 (tim8) from Neurospora crassa (strain ATCC 24698 / 74-OR23-1A / CBS 708.71 / DSM 1257 / FGSC 987).